A 348-amino-acid polypeptide reads, in one-letter code: Anthranilate phosphoribosyltransferase (348 aa).

5-phospho-alpha-D-ribose 1-diphosphate is bound by residues Gly89, 92 to 93 (GD), Thr97, 99 to 102 (NIST), 117 to 125 (KHGNRSVSS), and Ser129. Residue Gly89 coordinates anthranilate. Residue Ser101 participates in Mg(2+) binding. An anthranilate-binding site is contributed by Asn120. Arg175 contributes to the anthranilate binding site. Residues Asp233 and Glu234 each coordinate Mg(2+).

It belongs to the anthranilate phosphoribosyltransferase family. As to quaternary structure, homodimer. Requires Mg(2+) as cofactor.

The enzyme catalyses N-(5-phospho-beta-D-ribosyl)anthranilate + diphosphate = 5-phospho-alpha-D-ribose 1-diphosphate + anthranilate. Its pathway is amino-acid biosynthesis; L-tryptophan biosynthesis; L-tryptophan from chorismate: step 2/5. In terms of biological role, catalyzes the transfer of the phosphoribosyl group of 5-phosphorylribose-1-pyrophosphate (PRPP) to anthranilate to yield N-(5'-phosphoribosyl)-anthranilate (PRA). This is Anthranilate phosphoribosyltransferase from Shewanella sp. (strain W3-18-1).